The chain runs to 94 residues: Large ribosomal subunit protein bL28 (94 aa).

This sequence belongs to the bacterial ribosomal protein bL28 family.

This Maricaulis maris (strain MCS10) (Caulobacter maris) protein is Large ribosomal subunit protein bL28.